The chain runs to 1009 residues: Cilia- and flagella-associated protein 70 (1009 aa).

Positions Asn410–Pro428 are enriched in basic and acidic residues. Positions Asn410–Gly457 are disordered. TPR repeat units lie at residues Pro498 to Arg531, Ser635 to Asn668, Leu669 to His702, His704 to Asn736, His888 to Cys921, Thr923 to Asn954, and Glu956 to Asp988.

This sequence belongs to the CFAP70 family.

It localises to the cell projection. Its subcellular location is the cilium. It is found in the flagellum. The protein localises to the cytoplasm. The protein resides in the cytoskeleton. It localises to the flagellum basal body. Its subcellular location is the cilium axoneme. Functionally, axoneme-binding protein that plays a role in the regulation of ciliary motility and cilium length. This is Cilia- and flagella-associated protein 70 from Macaca fascicularis (Crab-eating macaque).